Reading from the N-terminus, the 177-residue chain is Small ribosomal subunit protein uS5 (177 aa).

One can recognise an S5 DRBM domain in the interval 19-82 (WQERVVQIRR…ADGKKQLVEV (64 aa)).

This sequence belongs to the universal ribosomal protein uS5 family. As to quaternary structure, part of the 30S ribosomal subunit. Contacts proteins S4 and S8.

Its function is as follows. With S4 and S12 plays an important role in translational accuracy. In terms of biological role, located at the back of the 30S subunit body where it stabilizes the conformation of the head with respect to the body. This Acaryochloris marina (strain MBIC 11017) protein is Small ribosomal subunit protein uS5.